We begin with the raw amino-acid sequence, 220 residues long: UPF0319 protein YccT (220 aa).

The signal sequence occupies residues 1 to 20; the sequence is MKTGALTTFLALCLPVTVFA.

This sequence belongs to the UPF0319 family.

The chain is UPF0319 protein YccT from Salmonella choleraesuis (strain SC-B67).